The following is a 315-amino-acid chain: MSESLRIIFAGTPDFAARHLDALLSSSHQVVGVFTQPDRPAGRGKKLMPGPVKVLAQENDIPVFQPKSLRSAENQELVAALNADVMVVVAYGLILPEAVLSMPRLGCINVHGSLLPRWRGAAPIQRSLWAGDAETGVTIMQMDKGLDTGDMLRKLSCPITADDTSASLYDKLAQLGPQGLLATLEDLAAGRAVPEKQDDAQATYADKLSKEEARLDWTLSAAQLERCIRAFNPWPVSFFMIDEQPVKVWKASVIRQQSHATPGTILDAGKQGIQVATTDGILNLESLQPAGKKPMSAQDLLNSRREWFTPGAILA.

Position 113–116 (113–116 (SLLP)) interacts with (6S)-5,6,7,8-tetrahydrofolate.

The protein belongs to the Fmt family.

The catalysed reaction is L-methionyl-tRNA(fMet) + (6R)-10-formyltetrahydrofolate = N-formyl-L-methionyl-tRNA(fMet) + (6S)-5,6,7,8-tetrahydrofolate + H(+). Attaches a formyl group to the free amino group of methionyl-tRNA(fMet). The formyl group appears to play a dual role in the initiator identity of N-formylmethionyl-tRNA by promoting its recognition by IF2 and preventing the misappropriation of this tRNA by the elongation apparatus. The sequence is that of Methionyl-tRNA formyltransferase from Cronobacter sakazakii (strain ATCC BAA-894) (Enterobacter sakazakii).